The sequence spans 862 residues: Active breakpoint cluster region-related protein (862 aa).

The segment at 30-84 (DAEGNEEHKSSREGSETMPYIDESPTMSPQLSARSQDSVDGVSPTPTEVLLPGGE) is disordered. Over residues 34 to 44 (NEEHKSSREGS) the composition is skewed to basic and acidic residues. Residues 54-67 (PTMSPQLSARSQDS) show a composition bias toward polar residues. In terms of domain architecture, DH spans 93–286 (MRKLVLSGVL…QNFLSSINED (194 aa)). The 160-residue stretch at 303–462 (QLVKDGFLVE…WREAIQKLQK (160 aa)) folds into the PH domain. Residues 488-616 (VHNVPIISHK…QSKNWHDDVI (129 aa)) form the C2 domain. The Rho-GAP domain maps to 650–848 (VKISVVTKRE…YYLQHPPISF (199 aa)).

The protein resides in the cell projection. The protein localises to the dendritic spine. Its subcellular location is the axon. It localises to the synapse. Protein with a unique structure having two opposing regulatory activities toward small GTP-binding proteins. The C-terminus is a GTPase-activating protein domain which stimulates GTP hydrolysis by RAC1, RAC2 and CDC42. Accelerates the intrinsic rate of GTP hydrolysis of RAC1 or CDC42, leading to down-regulation of the active GTP-bound form. The central Dbl homology (DH) domain functions as guanine nucleotide exchange factor (GEF) that modulates the GTPases CDC42, RHOA and RAC1. Promotes the conversion of CDC42, RHOA and RAC1 from the GDP-bound to the GTP-bound form. The protein is Active breakpoint cluster region-related protein (abr) of Xenopus tropicalis (Western clawed frog).